Reading from the N-terminus, the 372-residue chain is F-box/kelch-repeat protein At2g44630 (372 aa).

Over residues 1–13 (MSNADEPPQKTNQ) the composition is skewed to polar residues. The interval 1–21 (MSNADEPPQKTNQPPSSSLTP) is disordered. In terms of domain architecture, F-box spans 21-67 (PPSLFSLPVDIVLNILALVPKRYYPILCCVSKSLRSLIRSPEIHKTR). Kelch repeat units lie at residues 136-181 (EIYC…LVGG) and 183-228 (IYVI…SVSL).

The protein is F-box/kelch-repeat protein At2g44630 of Arabidopsis thaliana (Mouse-ear cress).